The chain runs to 240 residues: 3-deoxy-D-manno-octulosonic acid kinase (240 aa).

Asp-170 is an active-site residue.

It belongs to the protein kinase superfamily. KdkA/RfaP family.

The protein resides in the cell inner membrane. It catalyses the reaction an alpha-Kdo-(2-&gt;6)-lipid IVA + ATP = a 4-O-phospho-alpha-Kdo-(2-&gt;6)-lipid IVA + ADP + H(+). It participates in bacterial outer membrane biogenesis; LPS core biosynthesis. Functionally, catalyzes the ATP-dependent phosphorylation of the 3-deoxy-D-manno-octulosonic acid (Kdo) residue in Kdo-lipid IV(A) at the 4-OH position. This Actinobacillus succinogenes (strain ATCC 55618 / DSM 22257 / CCUG 43843 / 130Z) protein is 3-deoxy-D-manno-octulosonic acid kinase.